The primary structure comprises 190 residues: Venom nerve growth factor (190 aa).

Residues 1–7 (FLIGIWA) form the signal peptide. A propeptide spanning residues 8 to 111 (APKSEDNVPL…SLNRNIRAKR (104 aa)) is cleaved from the precursor. Cysteine 125 and cysteine 190 form a disulfide bridge. A glycan (N-linked (GlcNAc...) asparagine) is linked at asparagine 134.

The protein belongs to the NGF-beta family. In terms of assembly, homodimer; non-covalently linked. Post-translationally, glycosylated. Expressed by the venom gland.

Its subcellular location is the secreted. Nerve growth factor is important for the development and maintenance of the sympathetic and sensory nervous systems. It stimulates division and differentiation of sympathetic and embryonic sensory neurons as well as basal forebrain cholinergic neurons in the brain. Its relevance in the snake venom is not clear. However, it has been shown to inhibit metalloproteinase-dependent proteolysis of platelet glycoprotein Ib alpha, suggesting a metalloproteinase inhibition to prevent metalloprotease autodigestion and/or protection against prey proteases. Binds a lipid between the two protein chains in the homodimer. The lipid-bound form promotes histamine relase from mouse mast cells, contrary to the lipid-free form. The chain is Venom nerve growth factor from Agkistrodon contortrix contortrix (Southern copperhead).